The following is a 124-amino-acid chain: Large ribosomal subunit protein bL12 (124 aa).

It belongs to the bacterial ribosomal protein bL12 family. As to quaternary structure, homodimer. Part of the ribosomal stalk of the 50S ribosomal subunit. Forms a multimeric L10(L12)X complex, where L10 forms an elongated spine to which 2 to 4 L12 dimers bind in a sequential fashion. Binds GTP-bound translation factors.

Forms part of the ribosomal stalk which helps the ribosome interact with GTP-bound translation factors. Is thus essential for accurate translation. In Paracoccus denitrificans (strain Pd 1222), this protein is Large ribosomal subunit protein bL12.